The sequence spans 231 residues: MSKYSEIAAQGLWKNNPGLVQLLGLCPLLAVTATITNALGLGVATLLVLIGSNVLVSLVRDFVPKEIRIPVFVMIIAALVTCVQLLINAYAYNLYLSLGIFLPLIVTNCVIIGRAEAFASRNSLAHSAFDGLMMGLGFTAVLVVLGASRELLGQGTLFGGADLLLGDWASVLTIHVWHVDTPFLLAMLPPGAFIGMGLLIALKNVIDSRVNAMQPKVESVSVTRARITKVN.

The next 7 helical transmembrane spans lie at 18 to 38 (GLVQ…ITNA), 39 to 59 (LGLG…VSLV), 69 to 89 (IPVF…LINA), 93 to 113 (NLYL…VIIG), 127 to 147 (SAFD…VLGA), 157 to 177 (LFGG…IHVW), and 182 to 202 (PFLL…LIAL).

This sequence belongs to the NqrDE/RnfAE family. The complex is composed of six subunits: RnfA, RnfB, RnfC, RnfD, RnfE and RnfG.

Its subcellular location is the cell inner membrane. Functionally, part of a membrane-bound complex that couples electron transfer with translocation of ions across the membrane. In Shewanella frigidimarina (strain NCIMB 400), this protein is Ion-translocating oxidoreductase complex subunit E.